Here is a 307-residue protein sequence, read N- to C-terminus: Probable GTP 3',8-cyclase (307 aa).

Residues 5 to 227 (AYGRRISSLR…RRTKYYLGGA (223 aa)) form the Radical SAM core domain. Residue Arg14 coordinates GTP. The [4Fe-4S] cluster site is built by Cys21 and Cys25. Tyr27 is an S-adenosyl-L-methionine binding site. Cys28 serves as a coordination point for [4Fe-4S] cluster. Position 61 (Lys61) interacts with GTP. Gly65 contacts S-adenosyl-L-methionine. Position 89 (Thr89) interacts with GTP. Ser113 contributes to the S-adenosyl-L-methionine binding site. Lys151 serves as a coordination point for GTP. Positions 241 and 244 each coordinate [4Fe-4S] cluster. 246 to 248 (RLR) serves as a coordination point for GTP. Residue Cys258 coordinates [4Fe-4S] cluster.

This sequence belongs to the radical SAM superfamily. MoaA family. Requires [4Fe-4S] cluster as cofactor.

It catalyses the reaction GTP + AH2 + S-adenosyl-L-methionine = (8S)-3',8-cyclo-7,8-dihydroguanosine 5'-triphosphate + 5'-deoxyadenosine + L-methionine + A + H(+). It functions in the pathway cofactor biosynthesis; molybdopterin biosynthesis. Its function is as follows. Catalyzes the cyclization of GTP to (8S)-3',8-cyclo-7,8-dihydroguanosine 5'-triphosphate. In Methanocella arvoryzae (strain DSM 22066 / NBRC 105507 / MRE50), this protein is Probable GTP 3',8-cyclase.